A 360-amino-acid chain; its full sequence is MKTATAVINRRALRHNLQRIRQLAPDSQVVAIVKANAYGHGMIEAAHTFCDADCYGVARLSEALALRAAGITKPIVLLEGFFSADDLPLLVEHQLETAVHSPEQLAALEQATLSQPLRVWMKLDTGMHRLGVLPEHADAFWQRLTACRNVVQPVNIMSHFSRADEPEAGTTERQLTCFDAFTQGKPGAQSIAASGGILLWPQSHRDRVRPGIILYGVSPLDNEDAAHFGFQPAMTFTSHLIAVREHHTGEAVGYGGTWTSPRNTRLGVVAVGYGDGYPRCAPAGTPVLINGREVPLSGRVSMDMITVDLGPDAQDKVGDEVILWGPTLPVERIAAHTGASAYELITRLTQRTALEYVDGE.

Lysine 34 (proton acceptor; specific for D-alanine) is an active-site residue. Lysine 34 is modified (N6-(pyridoxal phosphate)lysine). Arginine 129 is a substrate binding site. The active-site Proton acceptor; specific for L-alanine is the tyrosine 254. Methionine 302 is a binding site for substrate.

This sequence belongs to the alanine racemase family. Pyridoxal 5'-phosphate is required as a cofactor.

The enzyme catalyses L-alanine = D-alanine. Its pathway is amino-acid biosynthesis; D-alanine biosynthesis; D-alanine from L-alanine: step 1/1. In terms of biological role, catalyzes the interconversion of L-alanine and D-alanine. May also act on other amino acids. This chain is Alanine racemase (alr), found in Pectobacterium carotovorum subsp. carotovorum (strain PC1).